The sequence spans 267 residues: Probable E3 ubiquitin-protein ligase dma1 (267 aa).

Residues 60–116 (IYIGRYTERYNGGDVSAIVFRSKVVSRRHAQIFYENNTWYIQDMGSSSGTFLNHVRL) enclose the FHA domain. The RING-type zinc finger occupies 192-236 (CCICLMPVLPCQALFVAPCSHSYHYKCIRPTLNESHPYFSCFICR).

The protein belongs to the DMA1 family. In terms of assembly, interacts with sid4.

The protein resides in the cytoplasm. Its subcellular location is the cytoskeleton. It is found in the microtubule organizing center. The protein localises to the spindle pole body. It carries out the reaction S-ubiquitinyl-[E2 ubiquitin-conjugating enzyme]-L-cysteine + [acceptor protein]-L-lysine = [E2 ubiquitin-conjugating enzyme]-L-cysteine + N(6)-ubiquitinyl-[acceptor protein]-L-lysine.. Functionally, probable E3 ubiquitin-protein ligase which is a component of the spindle assembly checkpoint, required to prevent septum formation and premature exit from mitosis if spindle function is compromised. Inhibits the septation initiation netwok (SIN) during spindle checkpoint activation. The effect appears to be mediated through preventing the SIN activator, plo1 kinase, from localizing to the SPB. This Schizosaccharomyces pombe (strain 972 / ATCC 24843) (Fission yeast) protein is Probable E3 ubiquitin-protein ligase dma1 (dma1).